We begin with the raw amino-acid sequence, 257 residues long: Beta-fibrinogenase (257 aa).

An N-terminal signal peptide occupies residues 1–18 (MVLIRVLANLLLLQLSHA). A propeptide spanning residues 19–24 (QKSSEL) is cleaved from the precursor. Residues 25–248 (VVGGDECNIN…YTDWIQSIIA (224 aa)) form the Peptidase S1 domain. Cystine bridges form between Cys31–Cys162, Cys49–Cys65, Cys97–Cys255, Cys141–Cys209, Cys173–Cys188, and Cys199–Cys224. The N-linked (GlcNAc...) asparagine glycan is linked to Asn44. The active-site Charge relay system is His64. Residues Asn78 and Asn102 are each glycosylated (N-linked (GlcNAc...) asparagine). Asp109 functions as the Charge relay system in the catalytic mechanism. N-linked (GlcNAc...) asparagine glycans are attached at residues Asn153 and Asn169. The active-site Charge relay system is Ser203. Asn250 carries an N-linked (GlcNAc...) asparagine glycan.

As to quaternary structure, monomer. In terms of processing, glycosylated. Contains 23.0% of hexoses, 8.3% of hexosamines and 1.0% of sialic acids. Expressed by the venom gland.

The protein localises to the secreted. Inhibited by diisopropylfluorophosphate (DFP) and PMSF. In terms of biological role, snake venom serine protease that has fibrinogenolytic activities by hydrolyzing the beta chain of fibrinogen (FGB). Typical arginine esterase which hydrolyzes esters and amides of arginine. This is Beta-fibrinogenase from Macrovipera lebetinus (Levantine viper).